The primary structure comprises 361 residues: Phospho-N-acetylmuramoyl-pentapeptide-transferase (361 aa).

10 consecutive transmembrane segments (helical) span residues leucine 28–leucine 48, threonine 74–leucine 94, isoleucine 99–alanine 119, serine 133–aspartate 153, leucine 168–serine 188, valine 203–isoleucine 223, threonine 236–phenylalanine 256, valine 263–isoleucine 283, isoleucine 288–valine 308, and lysine 338–leucine 358.

Belongs to the glycosyltransferase 4 family. MraY subfamily. Requires Mg(2+) as cofactor.

The protein resides in the cell inner membrane. The catalysed reaction is UDP-N-acetyl-alpha-D-muramoyl-L-alanyl-gamma-D-glutamyl-meso-2,6-diaminopimeloyl-D-alanyl-D-alanine + di-trans,octa-cis-undecaprenyl phosphate = di-trans,octa-cis-undecaprenyl diphospho-N-acetyl-alpha-D-muramoyl-L-alanyl-D-glutamyl-meso-2,6-diaminopimeloyl-D-alanyl-D-alanine + UMP. It functions in the pathway cell wall biogenesis; peptidoglycan biosynthesis. Its function is as follows. Catalyzes the initial step of the lipid cycle reactions in the biosynthesis of the cell wall peptidoglycan: transfers peptidoglycan precursor phospho-MurNAc-pentapeptide from UDP-MurNAc-pentapeptide onto the lipid carrier undecaprenyl phosphate, yielding undecaprenyl-pyrophosphoryl-MurNAc-pentapeptide, known as lipid I. In Rickettsia prowazekii (strain Madrid E), this protein is Phospho-N-acetylmuramoyl-pentapeptide-transferase.